A 504-amino-acid chain; its full sequence is Maturase K (504 aa).

It belongs to the intron maturase 2 family. MatK subfamily.

The protein resides in the plastid. The protein localises to the chloroplast. Usually encoded in the trnK tRNA gene intron. Probably assists in splicing its own and other chloroplast group II introns. This is Maturase K from Quercus suber (Cork oak).